The chain runs to 88 residues: Acyl-CoA-binding domain-containing protein 7 (88 aa).

An ACB domain is found at 3 to 88 (LQADFDRAAE…AKELIEKYGI (86 aa)). An acyl-CoA is bound by residues R15, 30 to 34 (YGLYK), K56, and Y75.

The protein belongs to the ACBD7 family.

Its function is as follows. Binds medium- and long-chain acyl-CoA esters. The chain is Acyl-CoA-binding domain-containing protein 7 (ACBD7) from Homo sapiens (Human).